Reading from the N-terminus, the 388-residue chain is Succinate--CoA ligase [ADP-forming] subunit beta (388 aa).

An ATP-grasp domain is found at 9-244; it reads KALFAEYGLP…PSQDDAREAH (236 aa). ATP-binding positions include Lys-46, 53–55, Glu-99, Thr-102, and Glu-107; that span reads GRG. Mg(2+)-binding residues include Asn-199 and Asp-213. Substrate contacts are provided by residues Asn-264 and 321-323; that span reads GIV.

It belongs to the succinate/malate CoA ligase beta subunit family. As to quaternary structure, heterotetramer of two alpha and two beta subunits. Requires Mg(2+) as cofactor.

The catalysed reaction is succinate + ATP + CoA = succinyl-CoA + ADP + phosphate. The enzyme catalyses GTP + succinate + CoA = succinyl-CoA + GDP + phosphate. It participates in carbohydrate metabolism; tricarboxylic acid cycle; succinate from succinyl-CoA (ligase route): step 1/1. Succinyl-CoA synthetase functions in the citric acid cycle (TCA), coupling the hydrolysis of succinyl-CoA to the synthesis of either ATP or GTP and thus represents the only step of substrate-level phosphorylation in the TCA. The beta subunit provides nucleotide specificity of the enzyme and binds the substrate succinate, while the binding sites for coenzyme A and phosphate are found in the alpha subunit. This is Succinate--CoA ligase [ADP-forming] subunit beta from Shewanella sediminis (strain HAW-EB3).